Here is a 547-residue protein sequence, read N- to C-terminus: MAAKDVKFDTDARNRMLKGVNTLADAVKVTLGPKGRNVVLEKSFGAPRITKDGVSVAKEIELEDKFENMGAQMVKEVASRTNDEAGDGTTTATVLAQSIVREGLKQVAAGLNPMDLKRGIDLATDKVVEAIKAMAREVKDSDEVAQVGTISANGEAEIGRQIADAMQKVGNDGVITVEENKGLETETDVVEGMQFDRGYLSPYFVTNADKMTAELEDCLILLHEKKLSSLQPMVPLLEQVIQSQKPLLIIAEDVEGEALATLVVNKLRGGLKIAAVKAPGFGDRRKAMLQDIAILTGGQVISEDLGMKLESVTMDMLGTAKKIQITKDETTIVDGAGEKAEIEARVAQIRAQIEETTSDYDREKLQERVAKLAGGVAVIRVGGMTEVEVKERKDRVDDALNATRAAVQEGVIVGGGVALVQAGKSLEGLTGVNADQNAGIAIVRRALEAPLRQIAENAGVDGAVVAGKIRESEDKNFGFNAQTEEYGDMFSFGVIDPAKVTRTALEDAASIAGLLITTEAMVADKPAKEGAAPAGGMPDMGGMGGMM.

ATP is bound by residues 30–33, Lys-51, 87–91, Gly-415, and Asp-496; these read TLGP and DGTTT. The tract at residues 528–547 is disordered; sequence KEGAAPAGGMPDMGGMGGMM. Residues 538–547 are compositionally biased toward gly residues; that stretch reads PDMGGMGGMM.

It belongs to the chaperonin (HSP60) family. In terms of assembly, forms a cylinder of 14 subunits composed of two heptameric rings stacked back-to-back. Interacts with the co-chaperonin GroES.

The protein resides in the cytoplasm. The enzyme catalyses ATP + H2O + a folded polypeptide = ADP + phosphate + an unfolded polypeptide.. Its function is as follows. Together with its co-chaperonin GroES, plays an essential role in assisting protein folding. The GroEL-GroES system forms a nano-cage that allows encapsulation of the non-native substrate proteins and provides a physical environment optimized to promote and accelerate protein folding. The sequence is that of Chaperonin GroEL from Ruegeria sp. (strain TM1040) (Silicibacter sp.).